Here is a 376-residue protein sequence, read N- to C-terminus: Queuine tRNA-ribosyltransferase (376 aa).

D90 serves as the catalytic Proton acceptor. Substrate contacts are provided by residues 90 to 94, D144, Q193, and G220; that span reads DSGGF. Residues 251–257 are RNA binding; the sequence is GVGTPED. The active-site Nucleophile is the D270. The RNA binding; important for wobble base 34 recognition stretch occupies residues 275–279; the sequence is TRNAR. Zn(2+) is bound by residues C308, C310, C313, and H339.

The protein belongs to the queuine tRNA-ribosyltransferase family. Homodimer. Within each dimer, one monomer is responsible for RNA recognition and catalysis, while the other monomer binds to the replacement base PreQ1. Zn(2+) serves as cofactor.

The enzyme catalyses 7-aminomethyl-7-carbaguanine + guanosine(34) in tRNA = 7-aminomethyl-7-carbaguanosine(34) in tRNA + guanine. It functions in the pathway tRNA modification; tRNA-queuosine biosynthesis. Catalyzes the base-exchange of a guanine (G) residue with the queuine precursor 7-aminomethyl-7-deazaguanine (PreQ1) at position 34 (anticodon wobble position) in tRNAs with GU(N) anticodons (tRNA-Asp, -Asn, -His and -Tyr). Catalysis occurs through a double-displacement mechanism. The nucleophile active site attacks the C1' of nucleotide 34 to detach the guanine base from the RNA, forming a covalent enzyme-RNA intermediate. The proton acceptor active site deprotonates the incoming PreQ1, allowing a nucleophilic attack on the C1' of the ribose to form the product. After dissociation, two additional enzymatic reactions on the tRNA convert PreQ1 to queuine (Q), resulting in the hypermodified nucleoside queuosine (7-(((4,5-cis-dihydroxy-2-cyclopenten-1-yl)amino)methyl)-7-deazaguanosine). The chain is Queuine tRNA-ribosyltransferase from Cupriavidus taiwanensis (strain DSM 17343 / BCRC 17206 / CCUG 44338 / CIP 107171 / LMG 19424 / R1) (Ralstonia taiwanensis (strain LMG 19424)).